A 221-amino-acid polypeptide reads, in one-letter code: Type II secretion system protein J (221 aa).

A propeptide spans 1-15 (MWRTNQVSSRQNMAG) (leader sequence). Phenylalanine 16 carries the N-methylphenylalanine modification. Residues 16–36 (FTLIEVLVAIAIFASLSVGAY) traverse the membrane as a helical segment.

It belongs to the GSP J family. Type II secretion is composed of four main components: the outer membrane complex, the inner membrane complex, the cytoplasmic secretion ATPase and the periplasm-spanning pseudopilus. Interacts with core component epsG. Cleaved by prepilin peptidase. Post-translationally, methylated by prepilin peptidase at the amino group of the N-terminal phenylalanine once the leader sequence is cleaved by prepilin peptidase.

Its subcellular location is the cell inner membrane. Functionally, component of the type II secretion system required for the energy-dependent secretion of extracellular factors such as proteases and toxins from the periplasm. Part of the pseudopilus tip complex that is critical for the recognition and binding of secretion substrates. This is Type II secretion system protein J (epsJ) from Vibrio cholerae serotype O1 (strain ATCC 39315 / El Tor Inaba N16961).